The chain runs to 317 residues: Putative 2-hydroxyacid dehydrogenase SAR2389 (317 aa).

NAD(+)-binding positions include 155–156 (EI), 234–236 (ASR), and Asp-260. Residue Arg-236 is part of the active site. Glu-265 is an active-site residue. His-283 functions as the Proton donor in the catalytic mechanism. 283 to 286 (HIGN) is a binding site for NAD(+).

It belongs to the D-isomer specific 2-hydroxyacid dehydrogenase family.

This is Putative 2-hydroxyacid dehydrogenase SAR2389 from Staphylococcus aureus (strain MRSA252).